Consider the following 128-residue polypeptide: Small ribosomal subunit protein uS12 (128 aa).

Aspartate 89 carries the post-translational modification 3-methylthioaspartic acid. The interval 101–128 (SLDTSGVADRRNGRSKYGAKRPKEGAKK) is disordered.

This sequence belongs to the universal ribosomal protein uS12 family. In terms of assembly, part of the 30S ribosomal subunit. Contacts proteins S8 and S17. May interact with IF1 in the 30S initiation complex.

Functionally, with S4 and S5 plays an important role in translational accuracy. Its function is as follows. Interacts with and stabilizes bases of the 16S rRNA that are involved in tRNA selection in the A site and with the mRNA backbone. Located at the interface of the 30S and 50S subunits, it traverses the body of the 30S subunit contacting proteins on the other side and probably holding the rRNA structure together. The combined cluster of proteins S8, S12 and S17 appears to hold together the shoulder and platform of the 30S subunit. The protein is Small ribosomal subunit protein uS12 of Chloroherpeton thalassium (strain ATCC 35110 / GB-78).